Here is a 146-residue protein sequence, read N- to C-terminus: Large ribosomal subunit protein uL15 (146 aa).

The segment at 1 to 56 (MKLHELRAAEGANKASKRVGRGTGSGLGKTSGKGQNGQNSRSGGGVRPGFEGGQMP) is disordered. Composition is skewed to gly residues over residues 21–35 (RGTGSGLGKTSGKGQ) and 42–52 (SGGGVRPGFEG).

This sequence belongs to the universal ribosomal protein uL15 family. As to quaternary structure, part of the 50S ribosomal subunit.

Functionally, binds to the 23S rRNA. This is Large ribosomal subunit protein uL15 from Clostridium botulinum (strain Loch Maree / Type A3).